Here is a 424-residue protein sequence, read N- to C-terminus: Adenylosuccinate synthetase 1 (424 aa).

Residues 12–18 (GDEGKGK) and 40–42 (GHT) each bind GTP. Asp13 functions as the Proton acceptor in the catalytic mechanism. 2 residues coordinate Mg(2+): Asp13 and Gly40. IMP-binding positions include 13-16 (DEGK), 38-41 (NAGH), Thr127, Arg141, Thr236, and Arg304. His41 (proton donor) is an active-site residue. 300–306 (ARTGRPR) provides a ligand contact to substrate. GTP contacts are provided by residues Arg306, 332 to 334 (KLD), and 413 to 415 (GVG).

It belongs to the adenylosuccinate synthetase family. Homodimer. It depends on Mg(2+) as a cofactor.

The protein localises to the cytoplasm. The enzyme catalyses IMP + L-aspartate + GTP = N(6)-(1,2-dicarboxyethyl)-AMP + GDP + phosphate + 2 H(+). It functions in the pathway purine metabolism; AMP biosynthesis via de novo pathway; AMP from IMP: step 1/2. Functionally, plays an important role in the de novo pathway of purine nucleotide biosynthesis. Catalyzes the first committed step in the biosynthesis of AMP from IMP. The protein is Adenylosuccinate synthetase 1 of Methanosarcina acetivorans (strain ATCC 35395 / DSM 2834 / JCM 12185 / C2A).